A 546-amino-acid chain; its full sequence is Chaperonin GroEL 4 (546 aa).

Residues 30 to 33, K51, 87 to 91, G415, and D495 each bind ATP; these read TLGP and DGTTT. The tract at residues 524-546 is disordered; sequence APKDTPAAGQPGGPGAGGPGLDF. Over residues 533 to 546 the composition is skewed to gly residues; it reads QPGGPGAGGPGLDF.

The protein belongs to the chaperonin (HSP60) family. As to quaternary structure, forms a cylinder of 14 subunits composed of two heptameric rings stacked back-to-back. Interacts with the co-chaperonin GroES.

It is found in the cytoplasm. It carries out the reaction ATP + H2O + a folded polypeptide = ADP + phosphate + an unfolded polypeptide.. Its function is as follows. Together with its co-chaperonin GroES, plays an essential role in assisting protein folding. The GroEL-GroES system forms a nano-cage that allows encapsulation of the non-native substrate proteins and provides a physical environment optimized to promote and accelerate protein folding. This chain is Chaperonin GroEL 4, found in Paraburkholderia xenovorans (strain LB400).